A 269-amino-acid chain; its full sequence is Shikimate dehydrogenase (NADP(+)) (269 aa).

Shikimate contacts are provided by residues 17 to 19 (SKS) and T64. K68 (proton acceptor) is an active-site residue. D80 is a binding site for NADP(+). 2 residues coordinate shikimate: N89 and D105. NADP(+) contacts are provided by residues 130–134 (GAGGA), 154–159 (NRTHAK), and M213. A shikimate-binding site is contributed by Y215. G237 lines the NADP(+) pocket.

This sequence belongs to the shikimate dehydrogenase family. Homodimer.

The catalysed reaction is shikimate + NADP(+) = 3-dehydroshikimate + NADPH + H(+). It participates in metabolic intermediate biosynthesis; chorismate biosynthesis; chorismate from D-erythrose 4-phosphate and phosphoenolpyruvate: step 4/7. Functionally, involved in the biosynthesis of the chorismate, which leads to the biosynthesis of aromatic amino acids. Catalyzes the reversible NADPH linked reduction of 3-dehydroshikimate (DHSA) to yield shikimate (SA). The chain is Shikimate dehydrogenase (NADP(+)) from Neisseria polysaccharea.